Here is a 646-residue protein sequence, read N- to C-terminus: 1-deoxy-D-xylulose-5-phosphate synthase (646 aa).

Thiamine diphosphate is bound by residues His-86 and 127–129; that span reads AHS. Residue Asp-158 participates in Mg(2+) binding. Thiamine diphosphate contacts are provided by residues 159–160, Asn-188, Tyr-295, and Glu-377; that span reads GA. Residue Asn-188 participates in Mg(2+) binding.

It belongs to the transketolase family. DXPS subfamily. As to quaternary structure, homodimer. Mg(2+) serves as cofactor. The cofactor is thiamine diphosphate.

It carries out the reaction D-glyceraldehyde 3-phosphate + pyruvate + H(+) = 1-deoxy-D-xylulose 5-phosphate + CO2. It functions in the pathway metabolic intermediate biosynthesis; 1-deoxy-D-xylulose 5-phosphate biosynthesis; 1-deoxy-D-xylulose 5-phosphate from D-glyceraldehyde 3-phosphate and pyruvate: step 1/1. In terms of biological role, catalyzes the acyloin condensation reaction between C atoms 2 and 3 of pyruvate and glyceraldehyde 3-phosphate to yield 1-deoxy-D-xylulose-5-phosphate (DXP). This Burkholderia ambifaria (strain ATCC BAA-244 / DSM 16087 / CCUG 44356 / LMG 19182 / AMMD) (Burkholderia cepacia (strain AMMD)) protein is 1-deoxy-D-xylulose-5-phosphate synthase.